The sequence spans 196 residues: SERTA domain-containing protein 3 (196 aa).

Positions methionine 1–tryptophan 21 are disordered. One can recognise an SERTA domain in the interval leucine 26–proline 73. The tract at residues threonine 104–valine 125 is disordered.

As to quaternary structure, interacts with RPA2. In terms of assembly, (Microbial infection) Interacts with influenza virus PA, PB1 and PB2,leading to inhibition of RdRp complex assembly. (Microbial infection) Interacts with zika virus capsid protein.

It is found in the nucleus. Antiviral interferon-stimulated protein that plays a role in innate immunity and in the suppression of viruses through different mechanisms. Plays a role in the late phase response of TLR-induced immune effector expression. During influenza infection, interacts with PB2, PB1, and PA to disrupt the formation of the viral RdRp complex. Inhibits zika virus by interacting with the capsid protein in the nucleolus and reducing its abundance through proteasomal degradation. Strong transcriptional coactivator. The polypeptide is SERTA domain-containing protein 3 (SERTAD3) (Homo sapiens (Human)).